The primary structure comprises 170 residues: 3-hydroxydecanoyl-[acyl-carrier-protein] dehydratase (170 aa).

H69 is a catalytic residue.

This sequence belongs to the thioester dehydratase family. FabA subfamily. In terms of assembly, homodimer.

The protein localises to the cytoplasm. The catalysed reaction is a (3R)-hydroxyacyl-[ACP] = a (2E)-enoyl-[ACP] + H2O. It catalyses the reaction (3R)-hydroxydecanoyl-[ACP] = (2E)-decenoyl-[ACP] + H2O. It carries out the reaction (2E)-decenoyl-[ACP] = (3Z)-decenoyl-[ACP]. The protein operates within lipid metabolism; fatty acid biosynthesis. Necessary for the introduction of cis unsaturation into fatty acids. Catalyzes the dehydration of (3R)-3-hydroxydecanoyl-ACP to E-(2)-decenoyl-ACP and then its isomerization to Z-(3)-decenoyl-ACP. Can catalyze the dehydratase reaction for beta-hydroxyacyl-ACPs with saturated chain lengths up to 16:0, being most active on intermediate chain length. The sequence is that of 3-hydroxydecanoyl-[acyl-carrier-protein] dehydratase from Caulobacter vibrioides (strain ATCC 19089 / CIP 103742 / CB 15) (Caulobacter crescentus).